The sequence spans 1039 residues: 3',5'-cyclic-AMP phosphodiesterase 4 (1039 aa).

Positions 1–29 are cleaved as a signal peptide; that stretch reads MFNNNNNDKINNTMMSNNPSGQIINLESI. 3 N-linked (GlcNAc...) asparagine glycosylation sites follow: Asn-11, Asn-34, and Asn-37. Over 30–201 the chain is Extracellular; sequence DCNSNLSNTT…KKKVNAESLR (172 aa). Disordered regions lie at residues 40–63 and 116–181; these read SIKDSNNNNNNNNNNNNNINNNIN and IIPN…NNSI. The segment covering 45–63 has biased composition (low complexity); sequence NNNNNNNNNNNNNINNNIN. N-linked (GlcNAc...) asparagine glycosylation is found at Asn-119, Asn-124, Asn-131, Asn-167, and Asn-178. Residues 202–222 form a helical membrane-spanning segment; the sequence is GPIIFQNFILYTFFLIVIGTA. At 223–226 the chain is on the cytoplasmic side; sequence EGTS. The chain crosses the membrane as a helical span at residues 227 to 247; that stretch reads WAPEIRVANFVPYCVMCVVLL. Over 248-256 the chain is Extracellular; that stretch reads EFNRLHKKP. A helical membrane pass occupies residues 257–277; it reads LLRIIFPLYTSNIPFAYMCIF. Topologically, residues 278–283 are cytoplasmic; that stretch reads SREARK. A helical transmembrane segment spans residues 284-304; that stretch reads YVLISLLFFASCLCIFLQSGI. Residues 305 to 310 lie on the Extracellular side of the membrane; sequence PDLRKH. Residues 311–331 form a helical membrane-spanning segment; sequence IVIFCIIFMINYGCCILFMDW. Topologically, residues 332 to 356 are cytoplasmic; sequence FYIDTTGTKPYRGRILATKIHWGEE. A helical transmembrane segment spans residues 357 to 377; that stretch reads ATILVSMALLGCIFIVLEKFI. Residues 378–1039 are Extracellular-facing; the sequence is KSYARCVAEQ…LTQSNYLIVV (662 aa). The stretch at 384-414 forms a coiled coil; sequence VAEQHYQIQCLQKEKEKLQTEINISLKKLDL. N-linked (GlcNAc...) asparagine glycans are attached at residues Asn-406, Asn-430, Asn-500, and Asn-515. Residues 533 to 973 form the PDEase domain; it reads PEITDQGIQE…QQLQQQQQQQ (441 aa). The active-site Proton donor is His-609. Residues His-613, His-648, and Asp-649 each contribute to the a divalent metal cation site. The interval 738–835 is disordered; sequence FPTTTNTQQP…NNSNSNNQNQ (98 aa). A compositionally biased stretch (low complexity) spans 740-835; that stretch reads TTTNTQQPSS…NNSNSNNQNQ (96 aa). N-linked (GlcNAc...) asparagine glycans are attached at residues Asn-769, Asn-791, Asn-795, Asn-804, Asn-809, Asn-823, and Asn-826. Residue Asp-861 coordinates a divalent metal cation. Asn-874, Asn-944, Asn-1018, and Asn-1023 each carry an N-linked (GlcNAc...) asparagine glycan. Residues 978–1019 show a composition bias toward low complexity; that stretch reads QQQQQQLHHHQQQQQFQHQQHQQQLQHQHQQQLNNQNQNQNQ. Residues 978–1033 form a disordered region; that stretch reads QQQQQQLHHHQQQQQFQHQQHQQQLQHQHQQQLNNQNQNQNQSNSNNSNSFGLTQS. A compositionally biased stretch (polar residues) spans 1020 to 1033; sequence SNSNNSNSFGLTQS.

This sequence belongs to the cyclic nucleotide phosphodiesterase family. A divalent metal cation is required as a cofactor.

The protein localises to the cell membrane. The enzyme catalyses 3',5'-cyclic AMP + H2O = AMP + H(+). Its activity is regulated as follows. Inhibited by 3-isobutyl-1-methylxanthine (IBMX). Its function is as follows. Phosphodiesterase specific for extracellular cAMP. Involved in the degradation of extracellular cAMP specifically during multicellular development. In Dictyostelium discoideum (Social amoeba), this protein is 3',5'-cyclic-AMP phosphodiesterase 4 (Pde4).